We begin with the raw amino-acid sequence, 541 residues long: Carboxypeptidase Y homolog A (541 aa).

The N-terminal stretch at 1-17 (MKVATSALLIGAAAAQQ) is a signal peptide. Residues 18–125 (QQILKFPDSF…KLEQYSLRAK (108 aa)) constitute a propeptide that is removed on maturation. Disulfide bonds link Cys-179-Cys-418, Cys-313-Cys-327, Cys-337-Cys-360, Cys-344-Cys-353, and Cys-382-Cys-388. Asn-210 carries an N-linked (GlcNAc...) asparagine glycan. Residue Ser-266 is part of the active site. Asp-457 is an active-site residue. Asn-505 carries an N-linked (GlcNAc...) asparagine glycan. The active site involves His-516.

Belongs to the peptidase S10 family.

It localises to the vacuole. The enzyme catalyses Release of a C-terminal amino acid with broad specificity.. Its function is as follows. Vacuolar carboxypeptidase involved in degradation of small peptides. Digests preferentially peptides containing an aliphatic or hydrophobic residue in P1' position, as well as methionine, leucine or phenylalanine in P1 position of ester substrate. The polypeptide is Carboxypeptidase Y homolog A (cpyA) (Pyrenophora tritici-repentis (strain Pt-1C-BFP) (Wheat tan spot fungus)).